The following is a 386-amino-acid chain: MERYTMLRFLDAGESHGKAMMSIIDGIPSNFKVDIDFINNELKRRQKCYGRGGRMKIEKDKIQFLSGLRGTMTTGNPITMAIYNNDSPNWEKILSGEVKKDEKITIPRPGHGDLVGYFKYGTGDIRDSIERTSARETSIRTAVGALCKQILKGIGIEVRSKVYSIGNLFDEKVDLFDQCKYKKIDNSLLRCYNEEVEKSFVKKIDICREQGETIGGTVFLSVRGVPIGLGSYSQWDRKLDALLSYAIMSLQGVKAIEFGNGMNLNLRGSTFNDEILYEKGKFKRPTNNCGGIESGVSNGENIEMKVYIKPIPSIKKNIRTVNLRNRKETTTRYERSDVSAVVPASIVLENIVAFEILKEILNKFPSDEYYELKRNISHYRGTIYLR.

2 residues coordinate NADP(+): arginine 45 and arginine 51. FMN is bound by residues arginine 131 to serine 133, glutamine 251 to glycine 252, serine 294, lysine 309 to serine 313, and arginine 335.

The protein belongs to the chorismate synthase family. Homotetramer. The cofactor is FMNH2.

The enzyme catalyses 5-O-(1-carboxyvinyl)-3-phosphoshikimate = chorismate + phosphate. It participates in metabolic intermediate biosynthesis; chorismate biosynthesis; chorismate from D-erythrose 4-phosphate and phosphoenolpyruvate: step 7/7. Functionally, catalyzes the anti-1,4-elimination of the C-3 phosphate and the C-6 proR hydrogen from 5-enolpyruvylshikimate-3-phosphate (EPSP) to yield chorismate, which is the branch point compound that serves as the starting substrate for the three terminal pathways of aromatic amino acid biosynthesis. This reaction introduces a second double bond into the aromatic ring system. This chain is Chorismate synthase, found in Clostridium tetani (strain Massachusetts / E88).